Consider the following 213-residue polypeptide: tRNA (guanine-N(7)-)-methyltransferase (213 aa).

Residues E43, D68, N95, and N117 each coordinate S-adenosyl-L-methionine. Substrate contacts are provided by residues D153 and 190-193 (TEYE).

It belongs to the class I-like SAM-binding methyltransferase superfamily. TrmB family.

The catalysed reaction is guanosine(46) in tRNA + S-adenosyl-L-methionine = N(7)-methylguanosine(46) in tRNA + S-adenosyl-L-homocysteine. Its pathway is tRNA modification; N(7)-methylguanine-tRNA biosynthesis. Catalyzes the formation of N(7)-methylguanine at position 46 (m7G46) in tRNA. This Desulfitobacterium hafniense (strain DSM 10664 / DCB-2) protein is tRNA (guanine-N(7)-)-methyltransferase.